We begin with the raw amino-acid sequence, 843 residues long: Lon protease (843 aa).

A compositionally biased stretch (basic and acidic residues) spans 1–16 (MRERKETAMSDKEKKG). The segment at 1 to 22 (MRERKETAMSDKEKKGAGAGAQ) is disordered. The region spanning 42-236 (LPILPLRNSV…LVLELLNRKR (195 aa)) is the Lon N-terminal domain. Residue 388–395 (GPPGVGKT) participates in ATP binding. The 182-residue stretch at 627-808 (TEIAGVATGL…DEVLQAALEE (182 aa)) folds into the Lon proteolytic domain. Catalysis depends on residues Ser-714 and Lys-757. Residues 805 to 843 (ALEENPVGRKPPAAPEPEGEKKPGATPTPPAKKPDEIRV) are disordered.

Belongs to the peptidase S16 family. In terms of assembly, homohexamer. Organized in a ring with a central cavity.

It localises to the cytoplasm. The enzyme catalyses Hydrolysis of proteins in presence of ATP.. In terms of biological role, ATP-dependent serine protease that mediates the selective degradation of mutant and abnormal proteins as well as certain short-lived regulatory proteins. Required for cellular homeostasis and for survival from DNA damage and developmental changes induced by stress. Degrades polypeptides processively to yield small peptide fragments that are 5 to 10 amino acids long. Binds to DNA in a double-stranded, site-specific manner. The sequence is that of Lon protease from Anaeromyxobacter dehalogenans (strain 2CP-C).